Reading from the N-terminus, the 168-residue chain is Large ribosomal subunit protein uL10 (168 aa).

This sequence belongs to the universal ribosomal protein uL10 family. As to quaternary structure, part of the ribosomal stalk of the 50S ribosomal subunit. The N-terminus interacts with L11 and the large rRNA to form the base of the stalk. The C-terminus forms an elongated spine to which L12 dimers bind in a sequential fashion forming a multimeric L10(L12)X complex.

Functionally, forms part of the ribosomal stalk, playing a central role in the interaction of the ribosome with GTP-bound translation factors. The chain is Large ribosomal subunit protein uL10 from Photorhabdus laumondii subsp. laumondii (strain DSM 15139 / CIP 105565 / TT01) (Photorhabdus luminescens subsp. laumondii).